The sequence spans 128 residues: L-ectoine synthase (128 aa).

Belongs to the ectoine synthase family.

The catalysed reaction is (2S)-4-acetamido-2-aminobutanoate = L-ectoine + H2O. It functions in the pathway amine and polyamine biosynthesis; ectoine biosynthesis; L-ectoine from L-aspartate 4-semialdehyde: step 3/3. In terms of biological role, catalyzes the circularization of gamma-N-acetyl-alpha,gamma-diaminobutyric acid (ADABA) to ectoine (1,4,5,6-tetrahydro-2-methyl-4-pyrimidine carboxylic acid), which is an excellent osmoprotectant. This is L-ectoine synthase from Aliivibrio fischeri (strain ATCC 700601 / ES114) (Vibrio fischeri).